A 2224-amino-acid chain; its full sequence is Protein sidekick (2224 aa).

The N-terminal stretch at 1-47 is a signal peptide; the sequence is MLKSAASSLRRRRPKTTITATLAIEMPSQPKLASLLAVLVLLCYCDS. At 48-2001 the chain is on the extracellular side; the sequence is CFFCYADANL…LQHKPFYRQT (1954 aa). The Ig-like C2-type 1 domain occupies 72–155; that stretch reads PRFTTHPSSS…SIFSEKSDVV (84 aa). C95 and C138 form a disulfide bridge. N164, N250, N318, and N327 each carry an N-linked (GlcNAc...) asparagine glycan. 4 Ig-like C2-type domains span residues 261 to 355, 359 to 445, 455 to 541, and 546 to 636; these read PEII…ARLQ, PPLF…NSAS, PIME…AYLS, and TQII…ARLS. 2 disulfide bridges follow: C283–C336 and C382–C433. N-linked (GlcNAc...) asparagine glycosylation is found at N463, N485, and N491. Cystine bridges form between C476–C525 and C567–C620. N628, N661, N707, N809, N870, N942, N1019, N1094, N1109, N1172, N1203, N1282, N1329, N1379, N1414, and N1420 each carry an N-linked (GlcNAc...) asparagine glycan. 13 consecutive Fibronectin type-III domains span residues 643-753, 758-855, 860-967, 971-1065, 1069-1164, 1169-1270, 1275-1372, 1376-1469, 1474-1570, 1575-1677, 1682-1785, 1789-1883, and 1885-1984; these read PPSN…LPQE, PPVG…TKEG, PPTN…TMDD, EVTG…VEPV, APTA…TIQA, PPFN…TREA, GPLD…TFED, VPSN…TNNR, APSV…TLPA, GVGG…VGEA, EPRA…TLPG, APLH…GPQD, and SPVA…TPSK. N-linked (GlcNAc...) asparagine glycans are attached at residues N1843 and N1876. The helical transmembrane segment at 2002 to 2022 threads the bilayer; the sequence is WFMVSLAATSIVIIVMVIAVL. The Cytoplasmic segment spans residues 2023–2224; that stretch reads CVKSKSYKYK…APLPGFSSFV (202 aa). Disordered stretches follow at residues 2068 to 2157 and 2171 to 2195; these read TLNS…RSDP and LRQS…PEGS. S2071 is subject to Phosphoserine. Residues 2073 to 2085 show a composition bias toward low complexity; that stretch reads GTLRSGTLGTLGR. T2074 carries the phosphothreonine modification. Composition is skewed to basic and acidic residues over residues 2112-2122 and 2144-2157; these read HSDEESLKCYD and QHSE…RSDP. Residues S2113 and S2117 each carry the phosphoserine modification.

It belongs to the sidekick family.

It is found in the membrane. Functionally, participates in homotypic or heterotypic interactions in the eye during pattern formation to prevent extra cells from joining the precluster and differentiating as photoreceptor cells. The sequence is that of Protein sidekick from Drosophila melanogaster (Fruit fly).